A 139-amino-acid chain; its full sequence is Ribulose bisphosphate carboxylase small subunit (139 aa).

This sequence belongs to the RuBisCO small chain family. As to quaternary structure, heterohexadecamer of 8 large and 8 small subunits.

It localises to the plastid. The protein localises to the chloroplast. In terms of biological role, ruBisCO catalyzes two reactions: the carboxylation of D-ribulose 1,5-bisphosphate, the primary event in carbon dioxide fixation, as well as the oxidative fragmentation of the pentose substrate in the photorespiration process. Both reactions occur simultaneously and in competition at the same active site. Although the small subunit is not catalytic it is essential for maximal activity. This Olisthodiscus luteus (Marine phytoflagellate) protein is Ribulose bisphosphate carboxylase small subunit.